The following is a 266-amino-acid chain: Ribosomal RNA small subunit methyltransferase A (266 aa).

Asparagine 12, leucine 14, glycine 39, glutamate 61, aspartate 87, and asparagine 107 together coordinate S-adenosyl-L-methionine.

Belongs to the class I-like SAM-binding methyltransferase superfamily. rRNA adenine N(6)-methyltransferase family. RsmA subfamily.

It is found in the cytoplasm. The enzyme catalyses adenosine(1518)/adenosine(1519) in 16S rRNA + 4 S-adenosyl-L-methionine = N(6)-dimethyladenosine(1518)/N(6)-dimethyladenosine(1519) in 16S rRNA + 4 S-adenosyl-L-homocysteine + 4 H(+). Specifically dimethylates two adjacent adenosines (A1518 and A1519) in the loop of a conserved hairpin near the 3'-end of 16S rRNA in the 30S particle. May play a critical role in biogenesis of 30S subunits. This Nitratidesulfovibrio vulgaris (strain ATCC 29579 / DSM 644 / CCUG 34227 / NCIMB 8303 / VKM B-1760 / Hildenborough) (Desulfovibrio vulgaris) protein is Ribosomal RNA small subunit methyltransferase A.